Here is an 82-residue protein sequence, read N- to C-terminus: Small ribosomal subunit protein bS16 (82 aa).

The protein belongs to the bacterial ribosomal protein bS16 family.

The sequence is that of Small ribosomal subunit protein bS16 from Vibrio campbellii (strain ATCC BAA-1116).